The primary structure comprises 92 residues: MAKRTKKVGIVGKYGTRYGASLRKVVKKTEVSQHSKFFCDFCGKYGMKRQAVGIWCCKGCNKTKAGGAYSLNTGGSVTVRSTIRRLREATEK.

The C4-type zinc-finger motif lies at 39–60 (CDFCGKYGMKRQAVGIWCCKGC).

This sequence belongs to the eukaryotic ribosomal protein eL43 family.

In Ostreococcus tauri, this protein is Large ribosomal subunit protein eL43 (RPL37a).